The chain runs to 273 residues: 2,3,4,5-tetrahydropyridine-2,6-dicarboxylate N-succinyltransferase (273 aa).

Residues arginine 104 and aspartate 141 each coordinate substrate.

It belongs to the transferase hexapeptide repeat family. Homotrimer.

It is found in the cytoplasm. The enzyme catalyses (S)-2,3,4,5-tetrahydrodipicolinate + succinyl-CoA + H2O = (S)-2-succinylamino-6-oxoheptanedioate + CoA. Its pathway is amino-acid biosynthesis; L-lysine biosynthesis via DAP pathway; LL-2,6-diaminopimelate from (S)-tetrahydrodipicolinate (succinylase route): step 1/3. The chain is 2,3,4,5-tetrahydropyridine-2,6-dicarboxylate N-succinyltransferase from Chromobacterium violaceum (strain ATCC 12472 / DSM 30191 / JCM 1249 / CCUG 213 / NBRC 12614 / NCIMB 9131 / NCTC 9757 / MK).